The chain runs to 425 residues: Histidine--tRNA ligase (425 aa).

This sequence belongs to the class-II aminoacyl-tRNA synthetase family. In terms of assembly, homodimer.

Its subcellular location is the cytoplasm. It catalyses the reaction tRNA(His) + L-histidine + ATP = L-histidyl-tRNA(His) + AMP + diphosphate + H(+). This chain is Histidine--tRNA ligase, found in Desulforapulum autotrophicum (strain ATCC 43914 / DSM 3382 / VKM B-1955 / HRM2) (Desulfobacterium autotrophicum).